We begin with the raw amino-acid sequence, 547 residues long: Chaperonin GroEL (547 aa).

Residues 30 to 33 (TLGP), K51, 87 to 91 (DGTTT), G415, and D496 contribute to the ATP site.

Belongs to the chaperonin (HSP60) family. As to quaternary structure, forms a cylinder of 14 subunits composed of two heptameric rings stacked back-to-back. Interacts with the co-chaperonin GroES.

Its subcellular location is the cytoplasm. It catalyses the reaction ATP + H2O + a folded polypeptide = ADP + phosphate + an unfolded polypeptide.. Functionally, together with its co-chaperonin GroES, plays an essential role in assisting protein folding. The GroEL-GroES system forms a nano-cage that allows encapsulation of the non-native substrate proteins and provides a physical environment optimized to promote and accelerate protein folding. This is Chaperonin GroEL from Actinobacillus pleuropneumoniae (Haemophilus pleuropneumoniae).